Consider the following 246-residue polypeptide: 1-(5-phosphoribosyl)-5-[(5-phosphoribosylamino)methylideneamino] imidazole-4-carboxamide isomerase (246 aa).

Asp-12 (proton acceptor) is an active-site residue. The active-site Proton donor is the Asp-134.

It belongs to the HisA/HisF family.

It is found in the cytoplasm. The catalysed reaction is 1-(5-phospho-beta-D-ribosyl)-5-[(5-phospho-beta-D-ribosylamino)methylideneamino]imidazole-4-carboxamide = 5-[(5-phospho-1-deoxy-D-ribulos-1-ylimino)methylamino]-1-(5-phospho-beta-D-ribosyl)imidazole-4-carboxamide. Its pathway is amino-acid biosynthesis; L-histidine biosynthesis; L-histidine from 5-phospho-alpha-D-ribose 1-diphosphate: step 4/9. This Haloarcula marismortui (strain ATCC 43049 / DSM 3752 / JCM 8966 / VKM B-1809) (Halobacterium marismortui) protein is 1-(5-phosphoribosyl)-5-[(5-phosphoribosylamino)methylideneamino] imidazole-4-carboxamide isomerase.